Reading from the N-terminus, the 122-residue chain is Large ribosomal subunit protein uL22 (122 aa).

The disordered stretch occupies residues 103–122 (VEGKEMKSSKSHKKNQAEGK).

It belongs to the universal ribosomal protein uL22 family. Part of the 50S ribosomal subunit.

Functionally, this protein binds specifically to 23S rRNA; its binding is stimulated by other ribosomal proteins, e.g. L4, L17, and L20. It is important during the early stages of 50S assembly. It makes multiple contacts with different domains of the 23S rRNA in the assembled 50S subunit and ribosome. The globular domain of the protein is located near the polypeptide exit tunnel on the outside of the subunit, while an extended beta-hairpin is found that lines the wall of the exit tunnel in the center of the 70S ribosome. The polypeptide is Large ribosomal subunit protein uL22 (Helicobacter pylori (strain P12)).